The primary structure comprises 346 residues: Glucose-6-phosphatase 3 (346 aa).

Residues 1 to 25 (MESTLSAGIMMAEALQNQLPGLENM) are Lumenal-facing. A helical transmembrane segment spans residues 26-46 (WLWVTFLADPKNLFQFYFPAV). Over 47–56 (YYASRRLGIS) the chain is Cytoplasmic. A helical membrane pass occupies residues 57 to 77 (LFWIAFITEWLNLVFKWFLFG). Topologically, residues 78–115 (DRPFWWVHESGYSAQTPVQIHQFPSSCETGPGSPSGHC) are lumenal. Position 79 (R79) interacts with substrate. Residue H114 is the Proton donor of the active site. A helical membrane pass occupies residues 116 to 135 (MITGAALWPVMIAISSQVAS). Residues 136–140 (QTRSP) lie on the Cytoplasmic side of the membrane. A helical transmembrane segment spans residues 141–162 (WVRVIPGLAYCTFLLAVGLSRV). Position 161 (R161) interacts with substrate. Residues 163–167 (FLLAH) are Lumenal-facing. H167 serves as the catalytic Nucleophile. The chain crosses the membrane as a helical span at residues 168–186 (FPHQVLAGLLAGVILGWLL). Residues 187–197 (SPRVPMERELS) are Cytoplasmic-facing. Residues 198 to 218 (FYGLTALTLMLGASLMYWTLF) traverse the membrane as a helical segment. Residues 219–254 (TLGLDLSWSINLASKWCDRPEWVLVDSRPFASLSRD) are Lumenal-facing. The chain crosses the membrane as a helical span at residues 255-273 (SGSALGLGIALHTPCYAQI). Residues 274-283 (RRVHLGNGQK) are Cytoplasmic-facing. A helical membrane pass occupies residues 284 to 304 (IACFVLAMGLLVFLEWLGHPP). At 305–307 (QIS) the chain is on the lumenal side. A helical membrane pass occupies residues 308 to 328 (LFYIFNFLKFTLWPCLVVALV). The Cytoplasmic segment spans residues 329–346 (PWMVHTLSAQEAPPIRSS).

Belongs to the glucose-6-phosphatase family. In terms of tissue distribution, expressed in liver and kidney. It is the major glucose-6-phosphatase expressed in the small intestine.

It is found in the endoplasmic reticulum membrane. The catalysed reaction is D-glucose 6-phosphate + H2O = D-glucose + phosphate. It participates in carbohydrate biosynthesis; gluconeogenesis. With respect to regulation, inhibited by vanadate. Its function is as follows. Hydrolyzes glucose-6-phosphate to glucose in the endoplasmic reticulum. May form with the glucose-6-phosphate transporter (SLC37A4/G6PT) a ubiquitously expressed complex responsible for glucose production through glycogenolysis and gluconeogenesis. Probably required for normal neutrophil function. The sequence is that of Glucose-6-phosphatase 3 (G6pc3) from Rattus norvegicus (Rat).